The chain runs to 1091 residues: Methionine S-methyltransferase (1091 aa).

The protein belongs to the class I-like SAM-binding methyltransferase superfamily. As to quaternary structure, homotetramer.

The protein localises to the cytoplasm. The enzyme catalyses L-methionine + S-adenosyl-L-methionine = S-methyl-L-methionine + S-adenosyl-L-homocysteine. Catalyzes the S-methylmethionine (SMM) biosynthesis from adenosyl-L-homocysteine (AdoMet) and methionine. SMM biosynthesis (by MMT1) and degradation (by HMT-1, HMT-2 and HMT-3) constitute the SMM cycle in plants, which is probably required to achieve short term control of AdoMet level. Also able to catalyze the selenium-methylmethionine (SeMM) from AdoMet and selenium-methionine (SeMet). May play a role in phoem sulfur transport; such function is however not essential. In Zea mays (Maize), this protein is Methionine S-methyltransferase (MMT1).